Consider the following 29-residue polypeptide: Photosystem I reaction center subunit XII (29 aa).

A helical transmembrane segment spans residues 7-24 (FVALLLALVPAVLAYRLG).

The protein belongs to the PsaM family.

Its subcellular location is the cellular thylakoid membrane. The protein is Photosystem I reaction center subunit XII of Synechococcus sp. (strain ATCC 27144 / PCC 6301 / SAUG 1402/1) (Anacystis nidulans).